The primary structure comprises 93 residues: Alpha-defensin 10 (93 aa).

A signal peptide spans 1 to 19 (MKTLVLLSALVLLAFQVQA). A propeptide spanning residues 20–58 (DPIQNTDEETKTEEQPGEDDQAVSVSFGDPEGSSLQEES) is cleaved from the precursor. The tract at residues 22 to 56 (IQNTDEETKTEEQPGEDDQAVSVSFGDPEGSSLQE) is disordered. 3 cysteine pairs are disulfide-bonded: cysteine 64/cysteine 92, cysteine 66/cysteine 81, and cysteine 71/cysteine 91.

The protein belongs to the alpha-defensin family. Paneth cells of the small bowel.

It localises to the secreted. Its function is as follows. Probably contributes to the antimicrobial barrier function of the small bowel mucosa. The protein is Alpha-defensin 10 (Defa10) of Mus musculus (Mouse).